Consider the following 356-residue polypeptide: RuBisCO accumulation factor 1 (356 aa).

The interval 9 to 192 (LSEEERQELL…RALIEALLLD (184 aa)) is N-terminal alpha-helix. The tract at residues 216–342 (PRLLPFAGTL…LVLILRPKRV (127 aa)) is C-terminal beta-sheet.

The protein belongs to the RAF family. As to quaternary structure, homodimer. Forms an RbcL(8)-Raf1(8) complex. Forms complexes of many stoichiometries with RbcL with and without RbcS. RbcX and Raf1 can bind simultaneously to RbcL.

It is found in the cytoplasm. A major RuBisCO chaperone. Acts after GroEL-GroES chaperonin to fold and/or assemble the large subunit of RuBisCO (ccbL, rbcL). Cooperates with RbcX in RbcL folding, plays the major role in assembly of dimers into RbcL(8)-Raf1(8) intermediate complexes. RbcS replaces Raf1, leading to holoenzyme formation. Functionally, the Raf1 dimer brackets an RbcL dimer, leading to RbcL(8)-Raf1(8) complex formation. RbcS displaces Raf1, resulting in holoenzyme formation. Probably plays a role in early carboxysome assembly; in its absence CcaA, CcmM, CcmN, RbcL and RbcS colocalize in small patches while the shell proteins CcmK2, CcmK3 and CcmK4 are found diffused in the cytoplasm. Its function is as follows. It has been suggested that Raf1 and RbcX are partially functionally redundant. Other evidence suggests they are antagonistic in mediating RuBisCO assembly. This is RuBisCO accumulation factor 1 from Synechococcus elongatus (strain ATCC 33912 / PCC 7942 / FACHB-805) (Anacystis nidulans R2).